The primary structure comprises 246 residues: V-type proton ATPase subunit D (246 aa).

The protein belongs to the V-ATPase D subunit family. V-ATPase is a heteromultimeric enzyme made up of two complexes: the ATP-hydrolytic V1 complex and the proton translocation V0 complex. The V1 complex consists of three catalytic AB heterodimers that form a heterohexamer, three peripheral stalks each consisting of EG heterodimers, one central rotor including subunits D and F, and the regulatory subunits C and H. The proton translocation complex V0 consists of the proton transport subunit a, a ring of proteolipid subunits c9c'', rotary subunit d, subunits e and f, and the accessory subunits VhaAC45 and ATP6AP2.

Functionally, subunit of the V1 complex of vacuolar(H+)-ATPase (V-ATPase), a multisubunit enzyme composed of a peripheral complex (V1) that hydrolyzes ATP and a membrane integral complex (V0) that translocates protons. V-ATPase is responsible for acidifying and maintaining the pH of intracellular compartments and in some cell types, is targeted to the plasma membrane, where it is responsible for acidifying the extracellular environment. The sequence is that of V-type proton ATPase subunit D from Manduca sexta (Tobacco hawkmoth).